The chain runs to 305 residues: Glycine--tRNA ligase alpha subunit (305 aa).

It belongs to the class-II aminoacyl-tRNA synthetase family. Tetramer of two alpha and two beta subunits.

It is found in the cytoplasm. It catalyses the reaction tRNA(Gly) + glycine + ATP = glycyl-tRNA(Gly) + AMP + diphosphate. This chain is Glycine--tRNA ligase alpha subunit, found in Ligilactobacillus salivarius (strain UCC118) (Lactobacillus salivarius).